The primary structure comprises 396 residues: Elongation factor Tu (396 aa).

Positions K10–E206 constitute a tr-type G domain. A G1 region spans residues G19–T26. G19–T26 contacts GTP. Residue T26 participates in Mg(2+) binding. The tract at residues G60 to N64 is G2. Positions D81–G84 are G3. Residues D81–H85 and N136–D139 contribute to the GTP site. The segment at N136 to D139 is G4. Residues S174–K176 form a G5 region.

Belongs to the TRAFAC class translation factor GTPase superfamily. Classic translation factor GTPase family. EF-Tu/EF-1A subfamily. In terms of assembly, monomer.

It localises to the cytoplasm. It carries out the reaction GTP + H2O = GDP + phosphate + H(+). In terms of biological role, GTP hydrolase that promotes the GTP-dependent binding of aminoacyl-tRNA to the A-site of ribosomes during protein biosynthesis. The polypeptide is Elongation factor Tu (Polynucleobacter asymbioticus (strain DSM 18221 / CIP 109841 / QLW-P1DMWA-1) (Polynucleobacter necessarius subsp. asymbioticus)).